A 644-amino-acid chain; its full sequence is Low affinity sulfate transporter 3 (644 aa).

Polar residues predominate over residues 1 to 19 (MSSLGTEQFSERSQWVLNS). The interval 1–20 (MSSLGTEQFSERSQWVLNSP) is disordered. Helical transmembrane passes span 50-70 (AVSF…YSAT), 76-96 (LLSG…YANL), 99-119 (LDPQ…ALMG), 124-144 (IAIG…PKVI), 156-176 (LVFT…VLRL), 179-199 (LVDF…AIVI), 242-262 (PLNF…RFIG), 268-288 (FFWL…LIVF), 328-348 (IGLI…RSFA), 394-414 (CKTA…LELF), 418-438 (LYYT…PGLI), 455-475 (LACL…GLLI), and 518-538 (PGIL…AGFV). One can recognise an STAS domain in the interval 511–635 (YPMAVTTPGI…LTVAEAVDAC (125 aa)).

This sequence belongs to the SLC26A/SulP transporter (TC 2.A.53) family.

The protein localises to the membrane. Functionally, low-affinity H(+)/sulfate cotransporter which may be involved in the internal transport of sulfate between cellular or subcellular compartments within the plant. The chain is Low affinity sulfate transporter 3 (ST3) from Stylosanthes hamata (Caribbean stylo).